The primary structure comprises 362 residues: Phosphoserine aminotransferase (362 aa).

Position 43 (R43) interacts with L-glutamate. Pyridoxal 5'-phosphate-binding positions include 77-78 (AS), W103, T153, D173, and Q196. At K197 the chain carries N6-(pyridoxal phosphate)lysine. 238–239 (NT) serves as a coordination point for pyridoxal 5'-phosphate.

Belongs to the class-V pyridoxal-phosphate-dependent aminotransferase family. SerC subfamily. In terms of assembly, homodimer. The cofactor is pyridoxal 5'-phosphate.

It is found in the cytoplasm. It carries out the reaction O-phospho-L-serine + 2-oxoglutarate = 3-phosphooxypyruvate + L-glutamate. The catalysed reaction is 4-(phosphooxy)-L-threonine + 2-oxoglutarate = (R)-3-hydroxy-2-oxo-4-phosphooxybutanoate + L-glutamate. Its pathway is amino-acid biosynthesis; L-serine biosynthesis; L-serine from 3-phospho-D-glycerate: step 2/3. Functionally, catalyzes the reversible conversion of 3-phosphohydroxypyruvate to phosphoserine and of 3-hydroxy-2-oxo-4-phosphonooxybutanoate to phosphohydroxythreonine. In Lysinibacillus sphaericus (strain C3-41), this protein is Phosphoserine aminotransferase.